The chain runs to 65 residues: DNA gyrase inhibitor YacG (65 aa).

4 residues coordinate Zn(2+): C9, C12, C28, and C32. The tract at residues 44–65 (EKRIPSSSDLSESDDWSEEPKQ) is disordered. The segment covering 54–65 (SESDDWSEEPKQ) has biased composition (acidic residues).

Belongs to the DNA gyrase inhibitor YacG family. Interacts with GyrB. Requires Zn(2+) as cofactor.

Its function is as follows. Inhibits all the catalytic activities of DNA gyrase by preventing its interaction with DNA. Acts by binding directly to the C-terminal domain of GyrB, which probably disrupts DNA binding by the gyrase. The chain is DNA gyrase inhibitor YacG from Escherichia coli O6:H1 (strain CFT073 / ATCC 700928 / UPEC).